The sequence spans 242 residues: ATP synthase subunit a (242 aa).

The next 6 helical transmembrane spans lie at 29–49 (SSIY…LAFY), 84–104 (FIPL…LGMT), 114–134 (IIVT…VGFI), 140–160 (FLTL…MIVI), 181–201 (MAGH…MIYL), and 203–223 (FLPI…AILQ).

The protein belongs to the ATPase A chain family. As to quaternary structure, F-type ATPases have 2 components, CF(1) - the catalytic core - and CF(0) - the membrane proton channel. CF(1) has five subunits: alpha(3), beta(3), gamma(1), delta(1), epsilon(1). CF(0) has three main subunits: a(1), b(2) and c(9-12). The alpha and beta chains form an alternating ring which encloses part of the gamma chain. CF(1) is attached to CF(0) by a central stalk formed by the gamma and epsilon chains, while a peripheral stalk is formed by the delta and b chains.

The protein resides in the cell inner membrane. Key component of the proton channel; it plays a direct role in the translocation of protons across the membrane. This is ATP synthase subunit a from Rickettsia typhi (strain ATCC VR-144 / Wilmington).